We begin with the raw amino-acid sequence, 119 residues long: Ribonuclease P protein component (119 aa).

The protein belongs to the RnpA family. As to quaternary structure, consists of a catalytic RNA component (M1 or rnpB) and a protein subunit.

The catalysed reaction is Endonucleolytic cleavage of RNA, removing 5'-extranucleotides from tRNA precursor.. Functionally, RNaseP catalyzes the removal of the 5'-leader sequence from pre-tRNA to produce the mature 5'-terminus. It can also cleave other RNA substrates such as 4.5S RNA. The protein component plays an auxiliary but essential role in vivo by binding to the 5'-leader sequence and broadening the substrate specificity of the ribozyme. The polypeptide is Ribonuclease P protein component (Sodalis glossinidius (strain morsitans)).